We begin with the raw amino-acid sequence, 521 residues long: Protein DETOXIFICATION 44, chloroplastic (521 aa).

A chloroplast-targeting transit peptide spans 1–31 (MAAVATSFCFSPHRSPSRFGNPNSSIRRTIV). Positions 12–73 (PHRSPSRFGN…DHDHKPDPGI (62 aa)) are disordered. Composition is skewed to polar residues over residues 18–27 (RFGNPNSSIR) and 42–61 (AVST…TSQN). 12 helical membrane passes run 80–100 (IMSI…TSLV), 103–123 (AFVG…VSVF), 167–187 (VSTS…ALSL), 213–235 (RLRA…FRGF), 242–262 (LYAV…LIFV), 268–288 (SGAA…LLWK), 314–334 (LLIG…SLAA), 345–365 (QIVL…AIAA), 385–405 (LFGV…VLFI), 423–443 (IALS…LAFV), 454–474 (FGFA…FMLV), and 481–503 (LAGI…AWRL).

Belongs to the multi antimicrobial extrusion (MATE) (TC 2.A.66.1) family. In terms of tissue distribution, expressed in shoots.

The protein resides in the plastid. The protein localises to the chloroplast membrane. The protein is Protein DETOXIFICATION 44, chloroplastic of Arabidopsis thaliana (Mouse-ear cress).